Reading from the N-terminus, the 489-residue chain is Virion host shutoff protein (489 aa).

4 disordered regions span residues 110-135, 142-161, 285-319, and 332-364; these read EEAS…AFSN, SLAS…PSAA, RSQT…ETRV, and GYED…LTPP. The span at 124–134 shows a compositional bias: polar residues; that stretch reads ITDSRPSSAFS.

This sequence belongs to the herpesviridae VHS protein family. In terms of assembly, interacts with human EIF4H, EIF4A1 and EIF4A2; interaction with eIF4AI and EIF4A2 presumably allows Vhs protein to associate with the eIF4F cap-binding complex.

Its subcellular location is the virion. Its function is as follows. Minor structural protein that acts as an endoribonuclease during lytic infection. Degrades host mRNAs in the cytoplasm by cutting them at preferred sites, including some in regions of translation initiation. Together with inhibition of host splicing by ICP27, contributes to an overall decrease in host protein synthesis. Also, after the onset of viral transcription, accelerates the turnover of viral mRNA, thereby facilitating the sequential expression of different classes of viral genes. Binds translation initiation factors eIF4H, eIF4AI, and eIF4AII, thereby may interact directly with the translation initiation complex and thus digest specifically mRNAs. Also impedes antigen presentation by major histocompatibility complex class I and class II molecules, inhibits secretion of cytokines that would otherwise recruit lymphocytes and neutrophils cells to the site of infection and blocks the activation of dendritic cells. Plays a role in the inhibition of interferon-beta activation by the cGAS/STING pathway. Mechanistically, down-regulates the expression of host cGAS/MB21D1. Also decreases the accumulation of other interferon-induced mRNAs such as host IFIT3 or CH25H to subvert their antiviral activity. This Human herpesvirus 1 (strain 17) (HHV-1) protein is Virion host shutoff protein (UL41).